Consider the following 89-residue polypeptide: Small ribosomal subunit protein uS15 (89 aa).

This sequence belongs to the universal ribosomal protein uS15 family. As to quaternary structure, part of the 30S ribosomal subunit. Forms a bridge to the 50S subunit in the 70S ribosome, contacting the 23S rRNA.

In terms of biological role, one of the primary rRNA binding proteins, it binds directly to 16S rRNA where it helps nucleate assembly of the platform of the 30S subunit by binding and bridging several RNA helices of the 16S rRNA. Its function is as follows. Forms an intersubunit bridge (bridge B4) with the 23S rRNA of the 50S subunit in the ribosome. This chain is Small ribosomal subunit protein uS15, found in Orientia tsutsugamushi (strain Ikeda) (Rickettsia tsutsugamushi).